A 939-amino-acid chain; its full sequence is Isoleucine--tRNA ligase (939 aa).

A 'HIGH' region motif is present at residues 57-67 (PYANGHIHIGH). Glu-563 contacts L-isoleucyl-5'-AMP. The short motif at 604–608 (KMSKS) is the 'KMSKS' region element. ATP is bound at residue Lys-607. Cys-903, Cys-906, Cys-921, and Cys-924 together coordinate Zn(2+).

It belongs to the class-I aminoacyl-tRNA synthetase family. IleS type 1 subfamily. As to quaternary structure, monomer. Zn(2+) is required as a cofactor.

It is found in the cytoplasm. It catalyses the reaction tRNA(Ile) + L-isoleucine + ATP = L-isoleucyl-tRNA(Ile) + AMP + diphosphate. Catalyzes the attachment of isoleucine to tRNA(Ile). As IleRS can inadvertently accommodate and process structurally similar amino acids such as valine, to avoid such errors it has two additional distinct tRNA(Ile)-dependent editing activities. One activity is designated as 'pretransfer' editing and involves the hydrolysis of activated Val-AMP. The other activity is designated 'posttransfer' editing and involves deacylation of mischarged Val-tRNA(Ile). This chain is Isoleucine--tRNA ligase, found in Sulfurihydrogenibium sp. (strain YO3AOP1).